The following is a 258-amino-acid chain: Aquaglyceroporin (258 aa).

The Cytoplasmic segment spans residues 1–16 (MKVTFGNEYIKNFLGE). The chain crosses the membrane as a helical span at residues 17 to 37 (FIGTFVLMFLGEGTTANHFAV). Over 38 to 45 (PIKNDWLR) the chain is Extracellular. A helical transmembrane segment spans residues 46–66 (LCIGWGLGVFFGILISAKLSG). Positions 67 and 70 each coordinate glycerol. Residues 67-87 (AHLNLAVTVGLSTIKKFNYKQ) lie on the Cytoplasmic side of the membrane. A helical membrane pass occupies residues 88 to 108 (IPLYFAGQLLGALSATASVYG). Residues 109–133 (LYYGFVSDQTIPKFSWETGKHANVH) are Extracellular-facing. Residues 134-154 (IASAFMHEFILTGILLLIILS) form a helical membrane-spanning segment. Residues 155–171 (VTDENICGKFHVLKVSS) are Cytoplasmic-facing. Residues 172–192 (IVGLAIICIGISFGGNTGFAL) form a helical membrane-spanning segment. Glycerol-binding residues include Gly-189, Phe-190, Asn-193, and Arg-196. The Extracellular portion of the chain corresponds to 193 to 217 (NPSRDLGARILSAIAYGFEAFTRDK). The chain crosses the membrane as a helical span at residues 218 to 238 (CYFWIPLIAPIIGSIIFCQIY). Topologically, residues 239 to 258 (DKIVAPLVVISEHDKGALEI) are cytoplasmic.

Belongs to the MIP/aquaporin (TC 1.A.8) family.

It localises to the cell membrane. It carries out the reaction H2O(in) = H2O(out). The catalysed reaction is glycerol(in) = glycerol(out). The enzyme catalyses urea(in) = urea(out). Mediates water and glycerol transport across the cell membrane. Permeable to urea. Required for efficient progression of parasites through the liver stages. In Plasmodium berghei (strain Anka), this protein is Aquaglyceroporin.